The following is a 419-amino-acid chain: Tol-Pal system protein TolB (419 aa).

Residues 1 to 19 form the signal peptide; sequence MFNRIISLFLLLFTGQVIA.

It belongs to the TolB family. In terms of assembly, the Tol-Pal system is composed of five core proteins: the inner membrane proteins TolA, TolQ and TolR, the periplasmic protein TolB and the outer membrane protein Pal. They form a network linking the inner and outer membranes and the peptidoglycan layer.

It is found in the periplasm. Part of the Tol-Pal system, which plays a role in outer membrane invagination during cell division and is important for maintaining outer membrane integrity. The protein is Tol-Pal system protein TolB of Legionella pneumophila subsp. pneumophila (strain Philadelphia 1 / ATCC 33152 / DSM 7513).